The following is an 85-amino-acid chain: Small ribosomal subunit protein bS16c (85 aa).

This sequence belongs to the bacterial ribosomal protein bS16 family.

It is found in the plastid. Its subcellular location is the chloroplast. This Cucumis sativus (Cucumber) protein is Small ribosomal subunit protein bS16c.